The chain runs to 1100 residues: Collagen alpha-2(I) chain (1100 aa).

The segment at Gln-1–Val-982 is disordered. Low complexity-rich tracts occupy residues Glu-122–Pro-170, Glu-200–Pro-209, and Pro-216–Pro-237. A compositionally biased stretch (pro residues) spans Phe-239–Gln-249. A compositionally biased stretch (low complexity) spans Pro-251–Ala-261. The segment covering Gly-268–Gly-277 has biased composition (gly residues). 4 stretches are compositionally biased toward low complexity: residues Met-333–Ala-352, Ser-358–Ala-385, Ala-435–Thr-448, and Gln-460–Pro-472. Gly residues predominate over residues Gly-473–Gly-482. A compositionally biased stretch (low complexity) spans Asn-507–Gln-517. Positions Gly-530 to Gly-557 are enriched in gly residues. Residues Lys-568–Pro-579 are compositionally biased toward basic and acidic residues. A compositionally biased stretch (low complexity) spans Pro-633 to Asp-646. Residues Gly-656–Gly-665 are compositionally biased toward gly residues. Low complexity-rich tracts occupy residues Pro-666–Arg-691, Phe-702–Lys-729, and Ser-757–Gln-775. The span at Gly-788–Gly-797 shows a compositional bias: gly residues. Low complexity-rich tracts occupy residues Glu-798–Pro-820 and Ala-854–Arg-866. The segment covering Gly-867–Gly-876 has biased composition (gly residues). Residues Ala-877–Pro-892 are compositionally biased toward low complexity. The span at Arg-893–Met-907 shows a compositional bias: basic and acidic residues. Residues Leu-916–Asn-935 are compositionally biased toward low complexity. The 30-residue stretch at Thr-1071 to Lys-1100 folds into the Fibrillar collagen NC1 domain.

This sequence belongs to the fibrillar collagen family.

The protein resides in the secreted. It is found in the extracellular space. Its subcellular location is the extracellular matrix. This is Collagen alpha-2(I) chain from Epinephelus caninus (Dogtooth grouper).